The chain runs to 249 residues: DNA repair protein RecO (249 aa).

It belongs to the RecO family.

In terms of biological role, involved in DNA repair and RecF pathway recombination. This chain is DNA repair protein RecO, found in Rhodopseudomonas palustris (strain HaA2).